The primary structure comprises 539 residues: Chaperonin GroEL 1 (539 aa).

Residues 30 to 33 (TLGP), Lys51, 87 to 91 (DGTTT), Gly415, 480 to 482 (NAA), and Asp496 contribute to the ATP site.

This sequence belongs to the chaperonin (HSP60) family. As to quaternary structure, forms a cylinder of 14 subunits composed of two heptameric rings stacked back-to-back. Interacts with the co-chaperonin GroES.

Its subcellular location is the cytoplasm. The enzyme catalyses ATP + H2O + a folded polypeptide = ADP + phosphate + an unfolded polypeptide.. Together with its co-chaperonin GroES, plays an essential role in assisting protein folding. The GroEL-GroES system forms a nano-cage that allows encapsulation of the non-native substrate proteins and provides a physical environment optimized to promote and accelerate protein folding. The sequence is that of Chaperonin GroEL 1 from Erythrobacter litoralis (strain HTCC2594).